The sequence spans 85 residues: Large ribosomal subunit protein eL43 (85 aa).

The C4-type zinc-finger motif lies at 38 to 59; the sequence is CPVCGRKAVRRISTGIWQCQKC.

Belongs to the eukaryotic ribosomal protein eL43 family. Zn(2+) serves as cofactor.

The sequence is that of Large ribosomal subunit protein eL43 from Thermococcus sibiricus (strain DSM 12597 / MM 739).